Consider the following 396-residue polypeptide: MGKEKFQRNKPHCNIGTIGHVDHGKTSLTAAITKVLAETGGATYTAYDQIDKAPEEKARGITISTAHVEYETKKRHYAHVDCPGHADYVKNMITGAAQMDGAILVVSAADGPMPQTREHILLARQVGVPALVVFMNKVDMVDDAELLELVELEVRELLSKYDFPGDDIPITKGSALCALEGKQPEIGHDAVLALMDTVDAYIPQPERPIDLPFLMPVEDVFSISGRGTVVTGRVERGIVKVGEEIEIVGLKPTVKTVVTGVEMFRKLLDQGQAGDNIGALLRGTKREDVERGQVLCKPGSVKPHTKFKAEAYILTKDEGGRHTPFFTNYRPQFYFRTTDVTGVVTLPEGTEMVMPGDNVTMDVELIAPIAMEEKLRFAIREGGRTVGAGVVASITE.

In terms of domain architecture, tr-type G spans 10 to 206 (KPHCNIGTIG…TVDAYIPQPE (197 aa)). The G1 stretch occupies residues 19–26 (GHVDHGKT). 19–26 (GHVDHGKT) is a binding site for GTP. Mg(2+) is bound at residue threonine 26. Residues 60–64 (GITIS) form a G2 region. The G3 stretch occupies residues 81-84 (DCPG). GTP is bound by residues 81-85 (DCPGH) and 136-139 (NKVD). The tract at residues 136 to 139 (NKVD) is G4. The G5 stretch occupies residues 174 to 176 (SAL).

It belongs to the TRAFAC class translation factor GTPase superfamily. Classic translation factor GTPase family. EF-Tu/EF-1A subfamily. In terms of assembly, monomer.

The protein localises to the cytoplasm. It carries out the reaction GTP + H2O = GDP + phosphate + H(+). In terms of biological role, GTP hydrolase that promotes the GTP-dependent binding of aminoacyl-tRNA to the A-site of ribosomes during protein biosynthesis. The polypeptide is Elongation factor Tu (Methylocella silvestris (strain DSM 15510 / CIP 108128 / LMG 27833 / NCIMB 13906 / BL2)).